Reading from the N-terminus, the 298-residue chain is Tyrosine recombinase XerC (298 aa).

Residues 1-85 form the Core-binding (CB) domain; sequence MKPIAAFQEY…SLRSFYRYLT (85 aa). A Tyr recombinase domain is found at 106 to 291; it reads HLPQFFYEAE…TMAHLKNEYM (186 aa). Catalysis depends on residues Arg-146, Lys-170, His-243, Arg-246, and His-269. Tyr-278 (O-(3'-phospho-DNA)-tyrosine intermediate) is an active-site residue.

This sequence belongs to the 'phage' integrase family. XerC subfamily. As to quaternary structure, forms a cyclic heterotetrameric complex composed of two molecules of XerC and two molecules of XerD.

The protein resides in the cytoplasm. Site-specific tyrosine recombinase, which acts by catalyzing the cutting and rejoining of the recombining DNA molecules. The XerC-XerD complex is essential to convert dimers of the bacterial chromosome into monomers to permit their segregation at cell division. It also contributes to the segregational stability of plasmids. This Lacticaseibacillus paracasei (strain ATCC 334 / BCRC 17002 / CCUG 31169 / CIP 107868 / KCTC 3260 / NRRL B-441) (Lactobacillus paracasei) protein is Tyrosine recombinase XerC.